A 253-amino-acid polypeptide reads, in one-letter code: UDP-Glc:alpha-D-GlcNAc-diphosphoundecaprenol beta-1,3-glucosyltransferase WfgD (253 aa).

Belongs to the glycosyltransferase 2 family. The cofactor is Mn(2+). Requires Mg(2+) as cofactor.

The protein localises to the cell inner membrane. It carries out the reaction N-acetyl-alpha-D-glucosaminyl-di-trans,octa-cis-undecaprenyl diphosphate + UDP-alpha-D-glucose = beta-D-Glc-(1-&gt;3)-alpha-D-GlcNAc-di-trans,octa-cis-undecaprenyl diphosphate + UDP + H(+). The protein operates within bacterial outer membrane biogenesis; lipopolysaccharide biosynthesis. Its function is as follows. Catalyzes the addition of Glc, the second sugar moiety of the O152-antigen repeating unit, to GlcNAc-pyrophosphate-undecaprenol. The protein is UDP-Glc:alpha-D-GlcNAc-diphosphoundecaprenol beta-1,3-glucosyltransferase WfgD (wfgD) of Escherichia coli.